A 216-amino-acid polypeptide reads, in one-letter code: PRA1 family protein B6 (216 aa).

A2 is subject to N-acetylalanine. The next 5 membrane-spanning stretches (helical) occupy residues 83–103 (LVAILLAASLLTHPFALFLLA), 105–125 (LAASWLFLYFFRPADQPLVIG), 135–155 (LGILCLSTVVVMFMTSVGSLL), 159–179 (LAVGIMGVAIHGAFRAPEDLF), and 186–206 (IGSGLFAFFNNNASNAAAAAI).

It belongs to the PRA1 family. In terms of assembly, interacts with PRA1B1, PRA1B2, PRA1B3, PRA1B4, PRA1B5 and PRA1E. In terms of tissue distribution, expressed in hypocotyls, roots, lateral roots, lateral root caps, columella cells, leaves and stomata.

It is found in the endoplasmic reticulum membrane. May be involved in both secretory and endocytic intracellular trafficking in the endosomal/prevacuolar compartments. The chain is PRA1 family protein B6 (PRA1B6) from Arabidopsis thaliana (Mouse-ear cress).